The following is a 416-amino-acid chain: MYLQGFGNYHHSEAVKGALPPNQNSPQHCSLGLYAEQLSGTSFTRPRHNNLRSWLYRILPTVTQGTYYPYEFNIMQPLVDELSPNAMRWSPLYNSSQIKCDFVEGLFHIAGSPLVNAYTYYCNHSMSDKYFANNDGELLFVPYTGEIHLHTEFGKLMLSSGSIAVIPRGVKFKVEVISKEAKGYLCENSGNPLTLPQLGPIGANGLANPRHFQYPVAAFENSVGEHTIICKNQKKLWFTVCNHSPLNVVAWHGNYAPYCYDLSLFNTINTVSFDHPDPSIFTVLTSESEIPGVSNLDFVIFPPRWMVAEHTFRPPYFHRNYMNELMGLVYGEYDAKKEGFIPGGISIHNCMTPHGPDYESYEIAASQDLKPNYINSLAFMFETKDYWQVTEQAYRHPSRQIDYLNCWQGFKIEFSQ.

H275 (proton acceptor) is an active-site residue. The Fe cation site is built by H318 and E324. Homogentisate-binding residues include Y333 and H354. H354 lines the Fe cation pocket.

The protein belongs to the homogentisate dioxygenase family. Hexamer; dimer of trimers. Fe cation is required as a cofactor.

The enzyme catalyses homogentisate + O2 = 4-maleylacetoacetate + H(+). The protein operates within amino-acid degradation; L-phenylalanine degradation; acetoacetate and fumarate from L-phenylalanine: step 4/6. In terms of biological role, involved in the catabolism of homogentisate (2,5-dihydroxyphenylacetate or 2,5-OH-PhAc), a central intermediate in the degradation of phenylalanine and tyrosine. Catalyzes the oxidative ring cleavage of the aromatic ring of homogentisate to yield maleylacetoacetate. The chain is Homogentisate 1,2-dioxygenase from Legionella pneumophila (strain Lens).